Reading from the N-terminus, the 295-residue chain is 33 kDa chaperonin (295 aa).

2 cysteine pairs are disulfide-bonded: Cys-230–Cys-232 and Cys-264–Cys-267.

Belongs to the HSP33 family. Post-translationally, under oxidizing conditions two disulfide bonds are formed involving the reactive cysteines. Under reducing conditions zinc is bound to the reactive cysteines and the protein is inactive.

It is found in the cytoplasm. Redox regulated molecular chaperone. Protects both thermally unfolding and oxidatively damaged proteins from irreversible aggregation. Plays an important role in the bacterial defense system toward oxidative stress. In Ectopseudomonas mendocina (strain ymp) (Pseudomonas mendocina), this protein is 33 kDa chaperonin.